Reading from the N-terminus, the 279-residue chain is Pantothenate synthetase (279 aa).

26-33 lines the ATP pocket; that stretch reads MGNLHDGH. Catalysis depends on histidine 33, which acts as the Proton donor. (R)-pantoate is bound at residue glutamine 57. Glutamine 57 lines the beta-alanine pocket. 144 to 147 provides a ligand contact to ATP; the sequence is GKKD. Glutamine 150 serves as a coordination point for (R)-pantoate. 181 to 184 contacts ATP; the sequence is LSSR.

The protein belongs to the pantothenate synthetase family. Homodimer.

The protein localises to the cytoplasm. It carries out the reaction (R)-pantoate + beta-alanine + ATP = (R)-pantothenate + AMP + diphosphate + H(+). The protein operates within cofactor biosynthesis; (R)-pantothenate biosynthesis; (R)-pantothenate from (R)-pantoate and beta-alanine: step 1/1. In terms of biological role, catalyzes the condensation of pantoate with beta-alanine in an ATP-dependent reaction via a pantoyl-adenylate intermediate. In Herminiimonas arsenicoxydans, this protein is Pantothenate synthetase.